Reading from the N-terminus, the 132-residue chain is 3-aminoacrylate deaminase RutC (132 aa).

It belongs to the RutC family.

It catalyses the reaction (Z)-3-aminoacrylate + H2O + H(+) = 3-oxopropanoate + NH4(+). Its function is as follows. Involved in pyrimidine catabolism. Catalyzes the deamination of 3-aminoacrylate to malonic semialdehyde, a reaction that can also occur spontaneously. RutC may facilitate the reaction and modulate the metabolic fitness, rather than catalyzing essential functions. This chain is 3-aminoacrylate deaminase RutC, found in Cronobacter turicensis (strain DSM 18703 / CCUG 55852 / LMG 23827 / z3032).